The chain runs to 604 residues: Protein hemingway (604 aa).

Disordered regions lie at residues 1–70, 103–309, 359–387, and 544–585; these read MSGA…GNPH, NQLS…PTSQ, SDRR…GGGI, and TIKA…IDLD. 4 stretches are compositionally biased toward acidic residues: residues 8-38, 135-183, 194-214, and 288-300; these read SDEE…YIEP, EDEA…DDAQ, DDSD…EDEP, and EEPE…EENQ. Over residues 368-379 the composition is skewed to low complexity; the sequence is EMSSMTETTMTS.

The protein belongs to the CFAP97 family. In terms of tissue distribution, detected in ciliated sensory neurons at all stages of development, and in adult testis.

The protein localises to the cell projection. It localises to the cilium. It is found in the perikaryon. Its subcellular location is the cytoplasm. Functionally, involved in assembly and/or maintenance of motile cilia. Required during spermatogenesis for axoneme elongation. Necessary for optimal function of the chordotonal (hearing) organs. The chain is Protein hemingway from Drosophila melanogaster (Fruit fly).